Consider the following 475-residue polypeptide: NADH-quinone oxidoreductase subunit N 1 (475 aa).

Transmembrane regions (helical) follow at residues 8 to 28, 36 to 56, 67 to 87, 100 to 120, 122 to 142, 157 to 177, 199 to 219, 244 to 264, 268 to 288, 295 to 315, 322 to 342, 366 to 386, 403 to 423, and 443 to 463; these read VMPLMTASGISILLILVEAAT, LFAILGFLLVFLSLPFSPSEP, GGFFTYTATVFSIGGLLITLI, GEYYIILFMAVVGMMLMSAAA, LTILFIGLELMSIALYVLAGI, FLLGAFASGIFLYGIALIYGA, FLSGIALLMIGLLFKVAAVPF, AAALSSMILVGISIAPILETF, PTAIAMIATLTMFFGNIAALI, MFAYSSIAHAGYMLIGIATGT, VLYYIFLYTLMNIGAFGIIIL, AFLMAMFMFSLAGIPPFGGFI, LAVAGVIASAVSVSYYLRVVI, and ATIALVAFLVLLFGIYPSLLI.

Belongs to the complex I subunit 2 family. In terms of assembly, NDH-1 is composed of 14 different subunits. Subunits NuoA, H, J, K, L, M, N constitute the membrane sector of the complex.

It is found in the cell inner membrane. The catalysed reaction is a quinone + NADH + 5 H(+)(in) = a quinol + NAD(+) + 4 H(+)(out). In terms of biological role, NDH-1 shuttles electrons from NADH, via FMN and iron-sulfur (Fe-S) centers, to quinones in the respiratory chain. The immediate electron acceptor for the enzyme in this species is believed to be a menaquinone. Couples the redox reaction to proton translocation (for every two electrons transferred, four hydrogen ions are translocated across the cytoplasmic membrane), and thus conserves the redox energy in a proton gradient. The polypeptide is NADH-quinone oxidoreductase subunit N 1 (Chloroherpeton thalassium (strain ATCC 35110 / GB-78)).